Here is a 266-residue protein sequence, read N- to C-terminus: Esterase AGAP003155 (266 aa).

Active-site charge relay system residues include Ser114, Asp172, and His199. Positions 231 to 266 (ATEENSFHLEGQEEAEESALQPVHEGLQNGSDSDSD) are disordered.

It belongs to the LovG family.

The chain is Esterase AGAP003155 from Anopheles gambiae (African malaria mosquito).